Reading from the N-terminus, the 367-residue chain is Putative heat shock 70 kDa protein 7 (367 aa).

It belongs to the heat shock protein 70 family.

The sequence is that of Putative heat shock 70 kDa protein 7 (HSPA7) from Homo sapiens (Human).